A 409-amino-acid polypeptide reads, in one-letter code: Secreted LysM effector Blys2 (409 aa).

An N-terminal signal peptide occupies residues 1–20 (MTRFTTTLVAALAGANLAAA). Positions 24–71 (YKWRAHAGDTCDSLSSDWSVQVSDFIKWNPSVGANCSNGVTAGQEYCV) constitute a LysM 1 domain. N-linked (GlcNAc...) asparagine glycosylation occurs at Asn-58. Residues 74-111 (NGAGSKPTTPPTGSPTTLTTAVTTASSTPTQPTDGAPS) form a disordered region. Over residues 87 to 106 (SPTTLTTAVTTASSTPTQPT) the composition is skewed to low complexity. LysM domains are found at residues 129 to 176 (AWYK…YVCV), 206 to 253 (KWYK…FVCV), 283 to 330 (KFYK…YYCI), and 357 to 405 (KYYK…YICV).

The protein belongs to the secreted LysM effector family.

It localises to the secreted. The protein resides in the cell wall. Secreted effector that enables the plant pathogenic fungus to manipulate host defenses for successful infection. Required for the full virulence to infect insect hosts. In contrast to Blys5, Blys2 is not able to protect fungal hyphae against the hydrolytic activity of chitinase but plays an important role in evasion of insect immunities. Binds chitin. Coats and protects the cell walls of insect pathogens from host cell recognition. The protein is Secreted LysM effector Blys2 of Beauveria bassiana (strain ARSEF 2860) (White muscardine disease fungus).